The following is a 260-amino-acid chain: Hydroxyacylglutathione hydrolase (260 aa).

Zn(2+) contacts are provided by His61, His63, Asp65, His66, His119, Asp138, and His176.

The protein belongs to the metallo-beta-lactamase superfamily. Glyoxalase II family. As to quaternary structure, monomer. Requires Zn(2+) as cofactor.

It catalyses the reaction an S-(2-hydroxyacyl)glutathione + H2O = a 2-hydroxy carboxylate + glutathione + H(+). The protein operates within secondary metabolite metabolism; methylglyoxal degradation; (R)-lactate from methylglyoxal: step 2/2. Functionally, thiolesterase that catalyzes the hydrolysis of S-D-lactoyl-glutathione to form glutathione and D-lactic acid. This Brucella anthropi (strain ATCC 49188 / DSM 6882 / CCUG 24695 / JCM 21032 / LMG 3331 / NBRC 15819 / NCTC 12168 / Alc 37) (Ochrobactrum anthropi) protein is Hydroxyacylglutathione hydrolase.